Reading from the N-terminus, the 353-residue chain is Methylthioribose-1-phosphate isomerase (353 aa).

Substrate-binding positions include 51 to 53, arginine 94, and glutamine 199; that span reads RGA. Aspartate 240 serves as the catalytic Proton donor. 250–251 is a substrate binding site; sequence NK.

The protein belongs to the EIF-2B alpha/beta/delta subunits family. MtnA subfamily. In terms of assembly, homodimer.

The enzyme catalyses 5-(methylsulfanyl)-alpha-D-ribose 1-phosphate = 5-(methylsulfanyl)-D-ribulose 1-phosphate. Its pathway is amino-acid biosynthesis; L-methionine biosynthesis via salvage pathway; L-methionine from S-methyl-5-thio-alpha-D-ribose 1-phosphate: step 1/6. Functionally, catalyzes the interconversion of methylthioribose-1-phosphate (MTR-1-P) into methylthioribulose-1-phosphate (MTRu-1-P). The sequence is that of Methylthioribose-1-phosphate isomerase from Bacillus cereus (strain ATCC 14579 / DSM 31 / CCUG 7414 / JCM 2152 / NBRC 15305 / NCIMB 9373 / NCTC 2599 / NRRL B-3711).